Reading from the N-terminus, the 272-residue chain is Putative phosphoenolpyruvate synthase regulatory protein (272 aa).

152-159 provides a ligand contact to ADP; that stretch reads GVSRCGKT.

This sequence belongs to the pyruvate, phosphate/water dikinase regulatory protein family. PSRP subfamily.

It catalyses the reaction [pyruvate, water dikinase] + ADP = [pyruvate, water dikinase]-phosphate + AMP + H(+). The catalysed reaction is [pyruvate, water dikinase]-phosphate + phosphate + H(+) = [pyruvate, water dikinase] + diphosphate. Bifunctional serine/threonine kinase and phosphorylase involved in the regulation of the phosphoenolpyruvate synthase (PEPS) by catalyzing its phosphorylation/dephosphorylation. This is Putative phosphoenolpyruvate synthase regulatory protein from Pseudomonas fluorescens (strain ATCC BAA-477 / NRRL B-23932 / Pf-5).